We begin with the raw amino-acid sequence, 675 residues long: MNNNSNNNNNNNIDQKNETTNEITNNTSNNNNIINNVNQNSTSITTSPILSPNNNINDNSMMDGKRLCASSKKVCSKRPMETYRFCIKHILEEPSAPFKQCEFISLKSQKQCTNPVSIKEKDPRFCVSHKHIIESTKKRVLESVVSSITSPSSSSPLPNASLIGSNSNITSPLQNLTTLNAFTGNNNNNTTTTTTTTTTNSTPSLNFDQQINIDIDNINGGDEPNLSLSASSFNFNIISNNDEEPKKKIMKILDRHGISQGRFYQDFKQNLKQLKQKHKQKQQLQNQKMFEQSQQQDQQQKPVQQPIQQQQQQDQLQIQEERQVSQQDEILEKQQQQQQQQQQQQQQQQQQQQQQQQQKKQQQELQIENNKENENINESNYFGEEFIEKDLEIELFKAMDDGHLSELCEDFDSDFYFASSSVLTDEELIQRRKIYISKLILLYKKQYNRFKERLRIIRRHYISTSLSLNQQNDSNKMEIDNNNDNNINNNNNNNNNNNNNNNNNNNNNNNNNNNNNNNNKLNKRKEEGNLCLSVNCKVKPMLLSKYCYSHILQDKDQKLFHECTYQLSANKKCGYPILKVQIPTLCREHLDIYETNNEIIKSLPKKQKQFIKQRIDIEKHNAPSTLVPVTQPINQNNQNNNNNNTNNSSKEESKDNNNNNNNKEILKDSDNTMIS.

Disordered stretches follow at residues methionine 1 to glutamine 39, threonine 183 to proline 203, leucine 274 to valine 324, aspartate 473 to lysine 523, and valine 627 to serine 675. Composition is skewed to low complexity over residues glutamine 282 to isoleucine 318, asparagine 482 to asparagine 519, and asparagine 634 to serine 648. Positions glutamate 664–serine 675 are enriched in basic and acidic residues.

The protein belongs to the INO80D family. Component of the chromatin-remodeling INO80 complex.

The protein resides in the nucleus. Putative regulatory component of the chromatin remodeling INO80 complex which is involved in transcriptional regulation, DNA replication and probably DNA repair. The chain is INO80 complex subunit D from Dictyostelium discoideum (Social amoeba).